We begin with the raw amino-acid sequence, 325 residues long: Flavin-dependent thymidylate synthase (325 aa).

One can recognise a ThyX domain in the interval 12 to 267 (ISVRLLEYTG…PRLFRWAGPS (256 aa)). FAD-binding positions include S65, 89–91 (RHR), and Q97. DUMP-binding positions include 86 to 89 (QLVR) and 97 to 101 (QLSHR). Residues 89–99 (RHRVASYTQLS) carry the ThyX motif motif. Residues 110–159 (AALKACESIGLDCPSKPAETEGGRKAAYRLYSQALERAARDFGASERFAI) are insert. DUMP is bound at residue R205. Residue 221-223 (NAR) coordinates FAD. R233 is a dUMP binding site. R233 functions as the Involved in ionization of N3 of dUMP, leading to its activation in the catalytic mechanism.

This sequence belongs to the thymidylate synthase ThyX family. Homotetramer. FAD is required as a cofactor.

The enzyme catalyses dUMP + (6R)-5,10-methylene-5,6,7,8-tetrahydrofolate + NADPH + H(+) = dTMP + (6S)-5,6,7,8-tetrahydrofolate + NADP(+). Its pathway is pyrimidine metabolism; dTTP biosynthesis. Functionally, catalyzes the reductive methylation of 2'-deoxyuridine-5'-monophosphate (dUMP) to 2'-deoxythymidine-5'-monophosphate (dTMP) while utilizing 5,10-methylenetetrahydrofolate (mTHF) as the methyl donor, and NADPH and FADH(2) as the reductant. This chain is Flavin-dependent thymidylate synthase, found in Aeropyrum pernix (strain ATCC 700893 / DSM 11879 / JCM 9820 / NBRC 100138 / K1).